The chain runs to 194 residues: Thymidine kinase (194 aa).

Residues 15-22 (GSMFSGKS) and 88-91 (DEVQ) contribute to the ATP site. The active-site Proton acceptor is glutamate 89. Residues cysteine 145, cysteine 148, cysteine 183, and cysteine 186 each coordinate Zn(2+).

Belongs to the thymidine kinase family. Homotetramer.

Its subcellular location is the cytoplasm. The catalysed reaction is thymidine + ATP = dTMP + ADP + H(+). The sequence is that of Thymidine kinase from Bacillus cereus (strain AH820).